The sequence spans 150 residues: Large ribosomal subunit protein uL13 (150 aa).

This sequence belongs to the universal ribosomal protein uL13 family. As to quaternary structure, part of the 50S ribosomal subunit.

This protein is one of the early assembly proteins of the 50S ribosomal subunit, although it is not seen to bind rRNA by itself. It is important during the early stages of 50S assembly. In Sulfurihydrogenibium sp. (strain YO3AOP1), this protein is Large ribosomal subunit protein uL13.